The primary structure comprises 473 residues: Siroheme synthase 1 (473 aa).

Positions 1-204 are precorrin-2 dehydrogenase /sirohydrochlorin ferrochelatase; that stretch reads MDYFPIFCQL…NDHVQADQHV (204 aa). NAD(+) contacts are provided by residues 22-23 and 43-44; these read EI and CE. A Phosphoserine modification is found at serine 128. The segment at 216-473 is uroporphyrinogen-III C-methyltransferase; it reads GEVVLVGAGP…KVTECVAHVG (258 aa). Proline 225 contacts S-adenosyl-L-methionine. Aspartate 248 serves as the catalytic Proton acceptor. The active-site Proton donor is lysine 270. S-adenosyl-L-methionine-binding positions include 301–303, isoleucine 306, 331–332, methionine 382, and glycine 411; these read GGD and TA.

In the N-terminal section; belongs to the precorrin-2 dehydrogenase / sirohydrochlorin ferrochelatase family. This sequence in the C-terminal section; belongs to the precorrin methyltransferase family.

The catalysed reaction is uroporphyrinogen III + 2 S-adenosyl-L-methionine = precorrin-2 + 2 S-adenosyl-L-homocysteine + H(+). It carries out the reaction precorrin-2 + NAD(+) = sirohydrochlorin + NADH + 2 H(+). The enzyme catalyses siroheme + 2 H(+) = sirohydrochlorin + Fe(2+). Its pathway is cofactor biosynthesis; adenosylcobalamin biosynthesis; precorrin-2 from uroporphyrinogen III: step 1/1. The protein operates within cofactor biosynthesis; adenosylcobalamin biosynthesis; sirohydrochlorin from precorrin-2: step 1/1. It functions in the pathway porphyrin-containing compound metabolism; siroheme biosynthesis; precorrin-2 from uroporphyrinogen III: step 1/1. It participates in porphyrin-containing compound metabolism; siroheme biosynthesis; siroheme from sirohydrochlorin: step 1/1. Its pathway is porphyrin-containing compound metabolism; siroheme biosynthesis; sirohydrochlorin from precorrin-2: step 1/1. Its function is as follows. Multifunctional enzyme that catalyzes the SAM-dependent methylations of uroporphyrinogen III at position C-2 and C-7 to form precorrin-2 via precorrin-1. Then it catalyzes the NAD-dependent ring dehydrogenation of precorrin-2 to yield sirohydrochlorin. Finally, it catalyzes the ferrochelation of sirohydrochlorin to yield siroheme. This Yersinia pestis (strain Pestoides F) protein is Siroheme synthase 1.